The primary structure comprises 312 residues: MASYLDFEKNIQQIDEDIINAQIKGDTEAVSILKKNLEKEISKTYKNLSDFQRLQLARHPDRPYALDYIELILNDAHEIHGDRAFRDDPAIVCFMGYLGEKKIIVIGEQKGRGTKDKIARNFGMPHPEGYRKALRVARLAEKFQIPILFLIDTPGAYPGIGAEERGQSEAIARNLYELSDLKIPTIAIVIGEGGSGGALAIGVADKLVMMKNSVFSVISPEGCAAILWNDPAKSEAATKAMKVTADDLKSQGLIDDVIDEPTNGAHRNKEAAAVAIADYVKKSLNELENIDVRELSANRMQKILKLGAYQEA.

The 251-residue stretch at 36 to 286 (NLEKEISKTY…ADYVKKSLNE (251 aa)) folds into the CoA carboxyltransferase C-terminal domain.

It belongs to the AccA family. As to quaternary structure, acetyl-CoA carboxylase is a heterohexamer composed of biotin carboxyl carrier protein (AccB), biotin carboxylase (AccC) and two subunits each of ACCase subunit alpha (AccA) and ACCase subunit beta (AccD).

The protein resides in the cytoplasm. The enzyme catalyses N(6)-carboxybiotinyl-L-lysyl-[protein] + acetyl-CoA = N(6)-biotinyl-L-lysyl-[protein] + malonyl-CoA. Its pathway is lipid metabolism; malonyl-CoA biosynthesis; malonyl-CoA from acetyl-CoA: step 1/1. Functionally, component of the acetyl coenzyme A carboxylase (ACC) complex. First, biotin carboxylase catalyzes the carboxylation of biotin on its carrier protein (BCCP) and then the CO(2) group is transferred by the carboxyltransferase to acetyl-CoA to form malonyl-CoA. The polypeptide is Acetyl-coenzyme A carboxylase carboxyl transferase subunit alpha (Campylobacter jejuni (strain RM1221)).